A 195-amino-acid polypeptide reads, in one-letter code: Probable GTP-binding protein EngB (195 aa).

Positions 24 to 195 (GLKEVALAGR…MIFNAIEKYL (172 aa)) constitute an EngB-type G domain. GTP contacts are provided by residues 32-39 (GRSNVGKS), 59-63 (GKTQT), 77-80 (DVPG), 144-147 (TKED), and 176-178 (YTA). The Mg(2+) site is built by serine 39 and threonine 61.

It belongs to the TRAFAC class TrmE-Era-EngA-EngB-Septin-like GTPase superfamily. EngB GTPase family. Mg(2+) serves as cofactor.

Its function is as follows. Necessary for normal cell division and for the maintenance of normal septation. This chain is Probable GTP-binding protein EngB, found in Macrococcus caseolyticus (strain JCSC5402) (Macrococcoides caseolyticum).